The following is a 53-amino-acid chain: Non-classical export protein 1 (53 aa).

A helical membrane pass occupies residues 7-29; that stretch reads FLLGKFSDPLLAIMVGCLSYYVY.

This sequence belongs to the NCE101 family.

It localises to the membrane. Involved in a novel pathway of export of proteins that lack a cleavable signal sequence. May be part of the export machinery or may also be a substrate for non-classical export. The protein is Non-classical export protein 1 (NCE101) of Saccharomyces cerevisiae (strain ATCC 204508 / S288c) (Baker's yeast).